The sequence spans 448 residues: Tubulin alpha-2 chain (448 aa).

Positions 11, 69, 138, 142, 143, 177, 204, and 226 each coordinate GTP. Mg(2+) is bound at residue E69. E252 is an active-site residue. The tract at residues 428-448 is disordered; that stretch reads KDYEEVGADSNEGGEEEGEEY. Acidic residues predominate over residues 429-448; that stretch reads DYEEVGADSNEGGEEEGEEY.

This sequence belongs to the tubulin family. As to quaternary structure, dimer of alpha and beta chains. A typical microtubule is a hollow water-filled tube with an outer diameter of 25 nm and an inner diameter of 15 nM. Alpha-beta heterodimers associate head-to-tail to form protofilaments running lengthwise along the microtubule wall with the beta-tubulin subunit facing the microtubule plus end conferring a structural polarity. Microtubules usually have 13 protofilaments but different protofilament numbers can be found in some organisms and specialized cells. The cofactor is Mg(2+). Undergoes a tyrosination/detyrosination cycle, the cyclic removal and re-addition of a C-terminal tyrosine residue. As to expression, expressed in intestine, pharyngeal muscle cells, and a subset of neurons.

It is found in the cytoplasm. The protein localises to the cytoskeleton. It carries out the reaction GTP + H2O = GDP + phosphate + H(+). Tubulin is the major constituent of microtubules, a cylinder consisting of laterally associated linear protofilaments composed of alpha- and beta-tubulin heterodimers. Microtubules grow by the addition of GTP-tubulin dimers to the microtubule end, where a stabilizing cap forms. Below the cap, tubulin dimers are in GDP-bound state, owing to GTPase activity of alpha-tubulin. Required for the normal dynamic behavior of the non-centrosomal microtubules in the epidermal syncytium. Involved in the redistribution of microtubule end-binding protein EB1/ebp-2 caused by wounding. Required to modulate expression in the epidermis of antimicrobial peptides, such as nlp-29, after wounding, or fungal infection. The chain is Tubulin alpha-2 chain (tba-2) from Caenorhabditis elegans.